A 461-amino-acid chain; its full sequence is Ornithine decarboxylase (461 aa).

Position 69 is an N6-(pyridoxal phosphate)lysine (Lys-69). Pyridoxal 5'-phosphate is bound by residues Ser-200, Gly-237, and 274 to 277 (EPGR). Phosphoserine; by CK2 is present on Ser-303. Residue 331-332 (YD) coordinates substrate. Cys-360 acts as the Proton donor; shared with dimeric partner in catalysis. Cys-360 is modified (S-nitrosocysteine; in inhibited form). Asp-361 serves as a coordination point for substrate. Tyr-389 lines the pyridoxal 5'-phosphate pocket.

Belongs to the Orn/Lys/Arg decarboxylase class-II family. In terms of assembly, homodimer. Only the dimer is catalytically active, as the active sites are constructed of residues from both monomers. Does not form a heterodimer with AZIN2. It depends on pyridoxal 5'-phosphate as a cofactor. Post-translationally, S-Nitrosylation inhibits the enzyme. S-Nitrosylated in vitro on 4 cysteine residues.

It carries out the reaction L-ornithine + H(+) = putrescine + CO2. Its pathway is amine and polyamine biosynthesis; putrescine biosynthesis via L-ornithine pathway; putrescine from L-ornithine: step 1/1. Inhibited by S-nitrosylation. Inhibited by antizymes (AZs) OAZ1, OAZ2 and OAZ3 in response to polyamine levels. AZs inhibit the assembly of the functional homodimer by binding to ODC monomers. Additionally, OAZ1 targets ODC monomers for ubiquitin-independent proteolytic destruction by the 26S proteasome. Inhibited by 1-amino-oxy-3-aminopropane (APA, an isosteric analog of putrescine). Irreversibly inhibited by alpha-difluoromethylornithine (DFMO). In terms of biological role, catalyzes the first and rate-limiting step of polyamine biosynthesis that converts ornithine into putrescine, which is the precursor for the polyamines, spermidine and spermine. Polyamines are essential for cell proliferation and are implicated in cellular processes, ranging from DNA replication to apoptosis. This chain is Ornithine decarboxylase (ODC1), found in Homo sapiens (Human).